A 354-amino-acid chain; its full sequence is Peptide chain release factor 1 (354 aa).

An N5-methylglutamine modification is found at Gln231. Residues 284-304 are compositionally biased toward basic and acidic residues; the sequence is EALAKDRKEQVGSGDRSERIR. Residues 284 to 308 form a disordered region; the sequence is EALAKDRKEQVGSGDRSERIRTYNF.

It belongs to the prokaryotic/mitochondrial release factor family. In terms of processing, methylated by PrmC. Methylation increases the termination efficiency of RF1.

Its subcellular location is the cytoplasm. In terms of biological role, peptide chain release factor 1 directs the termination of translation in response to the peptide chain termination codons UAG and UAA. The polypeptide is Peptide chain release factor 1 (Nitratiruptor sp. (strain SB155-2)).